Consider the following 397-residue polypeptide: MLSLRHIRRFCHFPSSAATGIAYVSTESNQIQGLKPLEEPALVKLKSERDPEKLYNLFKANATNRLVIENRFAFEDTVSRLAGAGRLDFIEDLLEHQKTLPQGRREGFIVRIIMLYGKAGMTKQALDTFFNMDLYGCKRSVKSFNAALQVLSFNPDLHTIWEFLHDAPSKYGIDIDAVSFNIAIKSFCELGILDGAYMAMREMEKSGLTPDVVTYTTLISALYKHERCVIGNGLWNLMVLKGCKPNLTTFNVRIQFLVNRRRAWDANDLLLLMPKLQVEPDSITYNMVIKGFFLARFPDMAERVYTAMHGKGYKPNLKIYQTMIHYLCKAGNFDLAYTMCKDCMRKKWYPNLDTVEMLLKGLVKKGQLDQAKSIMELVHRRVPPFRSKQLLSLKSIL.

The transit peptide at 1–81 (MLSLRHIRRF…FAFEDTVSRL (81 aa)) directs the protein to the mitochondrion. PPR repeat units follow at residues 105–139 (REGFIVRIIMLYGKAGMTKQALDTFFNMDLYGCKR), 140–170 (SVKSFNAALQVLSFNPDLHTIWEFLHDAPSK), 176–210 (DAVSFNIAIKSFCELGILDGAYMAMREMEKSGLTP), 211–245 (DVVTYTTLISALYKHERCVIGNGLWNLMVLKGCKP), 246–280 (NLTTFNVRIQFLVNRRRAWDANDLLLLMPKLQVEP), 281–315 (DSITYNMVIKGFFLARFPDMAERVYTAMHGKGYKP), 316–350 (NLKIYQTMIHYLCKAGNFDLAYTMCKDCMRKKWYP), and 351–381 (NLDTVEMLLKGLVKKGQLDQAKSIMELVHRR).

The protein belongs to the PPR family. P subfamily.

The protein resides in the mitochondrion. The chain is Pentatricopeptide repeat-containing protein At1g80150, mitochondrial from Arabidopsis thaliana (Mouse-ear cress).